The chain runs to 62 residues: Ferredoxin-2 (62 aa).

4Fe-4S ferredoxin-type domains are found at residues 2-28 (AHRI…SAGD) and 29-62 (SIYV…IIKV). Positions 9, 12, 15, 19, 38, 41, 50, and 54 each coordinate [4Fe-4S] cluster.

Requires [4Fe-4S] cluster as cofactor.

Its function is as follows. Ferredoxins are iron-sulfur proteins that transfer electrons in a wide variety of metabolic reactions. The protein is Ferredoxin-2 of Chlorobaculum tepidum (strain ATCC 49652 / DSM 12025 / NBRC 103806 / TLS) (Chlorobium tepidum).